Reading from the N-terminus, the 301-residue chain is Recombination-associated protein RdgC (301 aa).

The protein belongs to the RdgC family.

The protein localises to the cytoplasm. The protein resides in the nucleoid. In terms of biological role, may be involved in recombination. The polypeptide is Recombination-associated protein RdgC (Stenotrophomonas maltophilia (strain R551-3)).